Here is a 254-residue protein sequence, read N- to C-terminus: 5-oxoprolinase subunit A (254 aa).

Belongs to the LamB/PxpA family. As to quaternary structure, forms a complex composed of PxpA, PxpB and PxpC.

It catalyses the reaction 5-oxo-L-proline + ATP + 2 H2O = L-glutamate + ADP + phosphate + H(+). Functionally, catalyzes the cleavage of 5-oxoproline to form L-glutamate coupled to the hydrolysis of ATP to ADP and inorganic phosphate. The polypeptide is 5-oxoprolinase subunit A (Acinetobacter baumannii (strain ACICU)).